Here is a 536-residue protein sequence, read N- to C-terminus: Glutamyl-tRNA(Gln) amidotransferase subunit B, mitochondrial (536 aa).

The N-terminal 8 residues, 1 to 8 (MLRVHRLY), are a transit peptide targeting the mitochondrion.

This sequence belongs to the GatB/GatE family. GatB subfamily. As to quaternary structure, subunit of the heterotrimeric GatFAB amidotransferase (AdT) complex, composed of A, B and F subunits.

It localises to the mitochondrion. The enzyme catalyses L-glutamyl-tRNA(Gln) + L-glutamine + ATP + H2O = L-glutaminyl-tRNA(Gln) + L-glutamate + ADP + phosphate + H(+). In terms of biological role, allows the formation of correctly charged Gln-tRNA(Gln) through the transamidation of misacylated Glu-tRNA(Gln) in the mitochondria. The reaction takes place in the presence of glutamine and ATP through an activated gamma-phospho-Glu-tRNA(Gln). This Eremothecium gossypii (strain ATCC 10895 / CBS 109.51 / FGSC 9923 / NRRL Y-1056) (Yeast) protein is Glutamyl-tRNA(Gln) amidotransferase subunit B, mitochondrial.